A 354-amino-acid chain; its full sequence is Malate dehydrogenase 2, peroxisomal (354 aa).

The segment at 10–18 (RIARISAHL) is peroxisomal targeting signal PTS2. Residues 49–55 (GAAGGIG) and Asp-75 each bind NAD(+). Residues Arg-122 and Arg-128 each contribute to the substrate site. NAD(+)-binding positions include Asn-135 and 158-160 (ISN). Substrate is bound by residues Asn-160 and Arg-194. His-218 acts as the Proton acceptor in catalysis. NAD(+) is bound at residue Met-269.

It belongs to the LDH/MDH superfamily. MDH type 1 family. In terms of assembly, homodimer. Expressed in rosette leaves.

It is found in the peroxisome. The enzyme catalyses (S)-malate + NAD(+) = oxaloacetate + NADH + H(+). Functionally, catalyzes a reversible NAD-dependent dehydrogenase reaction involved in central metabolism and redox homeostasis between organelle compartments. Peroxisomal NAD-dependent malate dehydrogenase involved in fatty acid beta-oxidation. Reoxidizes NADH from the beta-oxidation and provides NAD for the conversion of fatty acyl-CoA to acetyl-CoA. Does not participate directly in the glyoxylate cycle. Required for maintenance of photosynthetic rates under photorespiratory conditions, and carbon flow during photorespiration. Supplies NADH reductant to the peroxisomal hydroxypyruvate reductase (HPR), which reduces hydroxypyruvate into glycerate in the photorespiratory cycle. The sequence is that of Malate dehydrogenase 2, peroxisomal from Arabidopsis thaliana (Mouse-ear cress).